Consider the following 443-residue polypeptide: UDP-N-acetylglucosamine 1-carboxyvinyltransferase 1 (443 aa).

22-23 contributes to the phosphoenolpyruvate binding site; it reads KN. Arginine 95 is a UDP-N-acetyl-alpha-D-glucosamine binding site. Cysteine 119 functions as the Proton donor in the catalytic mechanism. Cysteine 119 carries the 2-(S-cysteinyl)pyruvic acid O-phosphothioketal modification. Residues 124-128, aspartate 308, and valine 330 each bind UDP-N-acetyl-alpha-D-glucosamine; that span reads RPIDL.

Belongs to the EPSP synthase family. MurA subfamily.

It is found in the cytoplasm. The catalysed reaction is phosphoenolpyruvate + UDP-N-acetyl-alpha-D-glucosamine = UDP-N-acetyl-3-O-(1-carboxyvinyl)-alpha-D-glucosamine + phosphate. Its pathway is cell wall biogenesis; peptidoglycan biosynthesis. Cell wall formation. Adds enolpyruvyl to UDP-N-acetylglucosamine. In Oceanobacillus iheyensis (strain DSM 14371 / CIP 107618 / JCM 11309 / KCTC 3954 / HTE831), this protein is UDP-N-acetylglucosamine 1-carboxyvinyltransferase 1.